The following is a 765-amino-acid chain: Beta-glucosidase cel3A (765 aa).

A signal peptide spans 1–24 (MRWSSPTSSSLSLVALLLVAHVDA). N-linked (GlcNAc...) asparagine glycosylation is found at Asn66, Asn124, Asn250, Asn304, Asn311, Asn349, Asn549, Asn588, Asn657, and Asn681.

This sequence belongs to the glycosyl hydrolase 3 family.

The protein resides in the secreted. The enzyme catalyses Hydrolysis of terminal, non-reducing beta-D-glucosyl residues with release of beta-D-glucose.. It functions in the pathway glycan metabolism; cellulose degradation. Beta-glucosidases are one of a number of cellulolytic enzymes involved in the degradation of cellulosic biomass. Catalyzes the last step releasing glucose from the inhibitory cellobiose. Shows higher activities on cellobiose and cellotriose but lower activities on laminarioligosaccharides and polymers. The polypeptide is Beta-glucosidase cel3A (Pyricularia oryzae (strain 70-15 / ATCC MYA-4617 / FGSC 8958) (Rice blast fungus)).